The chain runs to 203 residues: Outer-membrane lipoprotein LolB (203 aa).

A signal peptide spans 1–22 (MPVNLNHTLLLCLLVAASLLSG). A lipid anchor (N-palmitoyl cysteine) is attached at C23. C23 carries the S-diacylglycerol cysteine lipid modification.

The protein belongs to the LolB family. As to quaternary structure, monomer.

It is found in the cell outer membrane. In terms of biological role, plays a critical role in the incorporation of lipoproteins in the outer membrane after they are released by the LolA protein. In Shewanella denitrificans (strain OS217 / ATCC BAA-1090 / DSM 15013), this protein is Outer-membrane lipoprotein LolB.